The chain runs to 316 residues: Porphobilinogen deaminase (316 aa).

Cys245 is modified (S-(dipyrrolylmethanemethyl)cysteine).

Belongs to the HMBS family. In terms of assembly, monomer. Dipyrromethane serves as cofactor.

The enzyme catalyses 4 porphobilinogen + H2O = hydroxymethylbilane + 4 NH4(+). The protein operates within porphyrin-containing compound metabolism; protoporphyrin-IX biosynthesis; coproporphyrinogen-III from 5-aminolevulinate: step 2/4. It functions in the pathway porphyrin-containing compound metabolism; chlorophyll biosynthesis. Functionally, tetrapolymerization of the monopyrrole PBG into the hydroxymethylbilane pre-uroporphyrinogen in several discrete steps. This Prochlorococcus marinus (strain AS9601) protein is Porphobilinogen deaminase.